A 188-amino-acid chain; its full sequence is Elongation factor P (188 aa).

N6-(3,6-diaminohexanoyl)-5-hydroxylysine is present on Lys34.

It belongs to the elongation factor P family. Post-translationally, may be beta-lysylated on the epsilon-amino group of Lys-34 by the combined action of EpmA and EpmB, and then hydroxylated on the C5 position of the same residue by EpmC (if this protein is present). Lysylation is critical for the stimulatory effect of EF-P on peptide-bond formation. The lysylation moiety may extend toward the peptidyltransferase center and stabilize the terminal 3-CCA end of the tRNA. Hydroxylation of the C5 position on Lys-34 may allow additional potential stabilizing hydrogen-bond interactions with the P-tRNA.

It localises to the cytoplasm. It functions in the pathway protein biosynthesis; polypeptide chain elongation. Functionally, involved in peptide bond synthesis. Alleviates ribosome stalling that occurs when 3 or more consecutive Pro residues or the sequence PPG is present in a protein, possibly by augmenting the peptidyl transferase activity of the ribosome. Modification of Lys-34 is required for alleviation. This chain is Elongation factor P, found in Glaesserella parasuis serovar 5 (strain SH0165) (Haemophilus parasuis).